The primary structure comprises 404 residues: Probable tRNA sulfurtransferase (404 aa).

The 106-residue stretch at glutamine 60–glutamate 165 folds into the THUMP domain. Residues methionine 183 to leucine 184, histidine 208 to phenylalanine 209, arginine 265, glycine 287, and glutamine 296 each bind ATP.

The protein belongs to the ThiI family.

It is found in the cytoplasm. The catalysed reaction is [ThiI sulfur-carrier protein]-S-sulfanyl-L-cysteine + a uridine in tRNA + 2 reduced [2Fe-2S]-[ferredoxin] + ATP + H(+) = [ThiI sulfur-carrier protein]-L-cysteine + a 4-thiouridine in tRNA + 2 oxidized [2Fe-2S]-[ferredoxin] + AMP + diphosphate. It carries out the reaction [ThiS sulfur-carrier protein]-C-terminal Gly-Gly-AMP + S-sulfanyl-L-cysteinyl-[cysteine desulfurase] + AH2 = [ThiS sulfur-carrier protein]-C-terminal-Gly-aminoethanethioate + L-cysteinyl-[cysteine desulfurase] + A + AMP + 2 H(+). Its pathway is cofactor biosynthesis; thiamine diphosphate biosynthesis. Functionally, catalyzes the ATP-dependent transfer of a sulfur to tRNA to produce 4-thiouridine in position 8 of tRNAs, which functions as a near-UV photosensor. Also catalyzes the transfer of sulfur to the sulfur carrier protein ThiS, forming ThiS-thiocarboxylate. This is a step in the synthesis of thiazole, in the thiamine biosynthesis pathway. The sulfur is donated as persulfide by IscS. The protein is Probable tRNA sulfurtransferase of Streptococcus pyogenes serotype M4 (strain MGAS10750).